The following is a 199-amino-acid chain: Ion-translocating oxidoreductase complex subunit A (199 aa).

The next 6 membrane-spanning stretches (helical) occupy residues 8–28 (LFTI…QFLG), 49–69 (VVFV…FILV), 75–95 (FLRT…VEFI), 106–126 (SLGI…AVLL), 138–158 (VVFG…MAAI), and 178–198 (AFFI…VIPL).

This sequence belongs to the NqrDE/RnfAE family. The Rnf complex is probably composed of eight subunits, including RnfA, RnfB, RnfC, RnfD, RnfE and RnfG.

It is found in the cell membrane. In terms of biological role, part of a membrane-bound complex that couples electron transfer with translocation of ions across the membrane. Catalyzes Na(+) transport, most probably coupled to electron transfer from reduced ferredoxin to methanophenazine and heterodisulfide reductase. Involved in heterodisulfide reduction during methanogenesis from acetate. The protein is Ion-translocating oxidoreductase complex subunit A of Methanosarcina acetivorans (strain ATCC 35395 / DSM 2834 / JCM 12185 / C2A).